The primary structure comprises 66 residues: Large ribosomal subunit protein bL35 (66 aa).

Belongs to the bacterial ribosomal protein bL35 family.

The chain is Large ribosomal subunit protein bL35 from Neorickettsia sennetsu (strain ATCC VR-367 / Miyayama) (Ehrlichia sennetsu).